The chain runs to 228 residues: Prepilin leader peptidase/N-methyltransferase (228 aa).

6 consecutive transmembrane segments (helical) span residues 18-38, 95-115, 116-136, 147-167, 168-188, and 204-224; these read LWGS…NVVI, RYPL…YLMA, PGVP…LAAI, LTLP…YVPL, AEAV…YWVF, and LLAA…LLLA.

It belongs to the peptidase A24 family.

It is found in the cell inner membrane. It carries out the reaction Typically cleaves a -Gly-|-Phe- bond to release an N-terminal, basic peptide of 5-8 residues from type IV prepilin, and then N-methylates the new N-terminal amino group, the methyl donor being S-adenosyl-L-methionine.. Its function is as follows. Plays an essential role in type IV pili and type II pseudopili formation by proteolytically removing the leader sequence from substrate proteins and subsequently monomethylating the alpha-amino group of the newly exposed N-terminal phenylalanine. The protein is Prepilin leader peptidase/N-methyltransferase (pulO) of Klebsiella pneumoniae.